Here is a 275-residue protein sequence, read N- to C-terminus: Large ribosomal subunit protein uL2 (275 aa).

The tract at residues Ala208 to Lys275 is disordered. 2 stretches are compositionally biased toward basic residues: residues Gly209–Thr219 and Lys254–Arg263.

It belongs to the universal ribosomal protein uL2 family. Part of the 50S ribosomal subunit. Forms a bridge to the 30S subunit in the 70S ribosome.

In terms of biological role, one of the primary rRNA binding proteins. Required for association of the 30S and 50S subunits to form the 70S ribosome, for tRNA binding and peptide bond formation. It has been suggested to have peptidyltransferase activity; this is somewhat controversial. Makes several contacts with the 16S rRNA in the 70S ribosome. The chain is Large ribosomal subunit protein uL2 from Coxiella burnetii (strain CbuK_Q154) (Coxiella burnetii (strain Q154)).